A 161-amino-acid polypeptide reads, in one-letter code: Copper transporter 1 (161 aa).

2 helical membrane passes run 55–75 (GGMY…VEFL) and 109–129 (VAYL…LVAV).

The protein belongs to the copper transporter (Ctr) (TC 1.A.56) family. SLC31A subfamily. In terms of assembly, self-interacts. Interacts with SWEET11 and COPT2.

The protein localises to the cell membrane. Its function is as follows. Involved in the transport of copper, in cooperation with SWEET11 and COPT2. Contributes to the removal of copper (Cu) from xylem, and thus to the sensitivity toward bacterial pathogens such as X.oryzae pv. oryzae (Xoo). This Oryza sativa subsp. japonica (Rice) protein is Copper transporter 1 (COPT1).